Consider the following 33-residue polypeptide: DELTA-pseudomyrmecitoxin-Pp1a subunit B (33 aa).

In terms of assembly, heterodimer composed of subunit A and subunit B (DELTA-PSDTX-Pp1a); disulfide-linked. In terms of tissue distribution, expressed by the venom gland.

It localises to the secreted. In terms of biological role, this heterodimer has insecticidal and cytotoxic properties. Induces immediate paralysis when injected into blowflies (Lucilia cuprina), and then death within 24 hours. Also inhibits the growth of Aedes albopictus mosquito C6/36 cells. This Pseudomyrmex penetrator (Ant) protein is DELTA-pseudomyrmecitoxin-Pp1a subunit B.